Here is a 538-residue protein sequence, read N- to C-terminus: Carboxypeptidase 2 (538 aa).

The N-terminal stretch at 1 to 21 (MVAYRFLTLISLGLGSHCASA) is a signal peptide. A glycan (N-linked (GlcNAc...) asparagine) is linked at Asn-46. Residues 53–76 (PAFTSPGTVPRGFSDGTSGPTRDE) are disordered. The Peptidase M14 domain occupies 71-351 (GPTRDETMEG…VMVKSILQTA (281 aa)). His-136, Glu-139, and His-224 together coordinate Zn(2+). Residue Glu-322 is the Proton donor/acceptor of the active site. N-linked (GlcNAc...) asparagine glycans are attached at residues Asn-393 and Asn-459.

Belongs to the peptidase M14 family. The cofactor is Zn(2+).

The protein localises to the secreted. Its function is as follows. Extracellular metalloprotease that contributes to pathogenicity. This is Carboxypeptidase 2 (MCPB) from Trichophyton tonsurans (Scalp ringworm fungus).